Consider the following 499-residue polypeptide: Guanosine-5'-triphosphate,3'-diphosphate pyrophosphatase (499 aa).

This sequence belongs to the GppA/Ppx family. GppA subfamily.

The catalysed reaction is guanosine 3'-diphosphate 5'-triphosphate + H2O = guanosine 3',5'-bis(diphosphate) + phosphate + H(+). Its pathway is purine metabolism; ppGpp biosynthesis; ppGpp from GTP: step 2/2. Its function is as follows. Catalyzes the conversion of pppGpp to ppGpp. Guanosine pentaphosphate (pppGpp) is a cytoplasmic signaling molecule which together with ppGpp controls the 'stringent response', an adaptive process that allows bacteria to respond to amino acid starvation, resulting in the coordinated regulation of numerous cellular activities. The protein is Guanosine-5'-triphosphate,3'-diphosphate pyrophosphatase of Klebsiella pneumoniae (strain 342).